Reading from the N-terminus, the 668-residue chain is BTB/POZ domain-containing protein At5g66560 (668 aa).

The BTB domain occupies 21-133 (SDIEIEVDDM…CYGVKMDLSA (113 aa)). Positions 73–84 (ETDKKGKGHEIE) are enriched in basic and acidic residues. The interval 73-98 (ETDKKGKGHEIEDDKEEEEVEEQEIE) is disordered. Positions 85-98 (DDKEEEEVEEQEIE) are enriched in acidic residues. An NPH3 domain is found at 254–530 (ELWFEDLTQL…VQVLFFEQLQ (277 aa)). Residue Tyr-471 is modified to Phosphotyrosine.

The protein belongs to the NPH3 family.

Its pathway is protein modification; protein ubiquitination. In terms of biological role, may act as a substrate-specific adapter of an E3 ubiquitin-protein ligase complex (CUL3-RBX1-BTB) which mediates the ubiquitination and subsequent proteasomal degradation of target proteins. The chain is BTB/POZ domain-containing protein At5g66560 from Arabidopsis thaliana (Mouse-ear cress).